Reading from the N-terminus, the 245-residue chain is Thiopurine S-methyltransferase (245 aa).

Serine 14 bears the Phosphoserine mark. 29–40 (WQDKWVNGNTAF) is an S-adenosyl-L-methionine binding site. Residue phenylalanine 40 coordinates substrate. Lysine 58 is modified (N6-acetyllysine). S-adenosyl-L-methionine-binding positions include leucine 69, glutamate 90, 134 to 135 (SI), and arginine 152.

This sequence belongs to the class I-like SAM-binding methyltransferase superfamily. TPMT family. As to quaternary structure, monomer.

The protein resides in the cytoplasm. The enzyme catalyses S-adenosyl-L-methionine + a thiopurine = S-adenosyl-L-homocysteine + a thiopurine S-methylether.. This Pongo pygmaeus (Bornean orangutan) protein is Thiopurine S-methyltransferase (TPMT).